An 880-amino-acid polypeptide reads, in one-letter code: Pyruvate, phosphate dikinase (880 aa).

Residues 1 to 348 (MNKLIYYFGN…LYILQTRTAK (348 aa)) form an N-terminal region. Position 97 (Arg97) interacts with ATP. Residues 349–405 (RTAIAAINIAVQMVEEKLISKEQALMRIDPESLNQLLHTRIDYSKKLTAIAEGLPAS) are linker 1. Residues 406–503 (PGAATGIVVF…VIKQGDIITI (98 aa)) are central. At Thr458 the chain carries Phosphothreonine; by PDRP1. The active-site Tele-phosphohistidine intermediate is His460. Residues 504-538 (DGGSGKIFLGEMPLIQPTFSEESTLILDWADEISS) are linker 2. The interval 539–879 (LKVRANAETV…AAAQAKIKQG (341 aa)) is C-terminal. The substrate site is built by Arg566, Arg622, Glu750, Gly771, Thr772, Asn773, and Asp774. Glu750 contributes to the Mg(2+) binding site. Asp774 is a Mg(2+) binding site. Residue Cys836 is the Proton donor of the active site.

The protein belongs to the PEP-utilizing enzyme family. As to quaternary structure, homodimer. Mg(2+) is required as a cofactor. In terms of processing, phosphorylation of Thr-458 in the dark inactivates the enzyme. Dephosphorylation upon light stimulation reactivates the enzyme.

It carries out the reaction pyruvate + phosphate + ATP = phosphoenolpyruvate + AMP + diphosphate + H(+). With respect to regulation, activated by light-induced dephosphorylation. Inhibited by dark-induced phosphorylation. Both reactions are catalyzed by PDRP1. Functionally, catalyzes the reversible phosphorylation of pyruvate and phosphate. The protein is Pyruvate, phosphate dikinase (ppdK) of Rickettsia typhi (strain ATCC VR-144 / Wilmington).